We begin with the raw amino-acid sequence, 286 residues long: Bifunctional protein FolD (286 aa).

Residues 164–166 (GRS), serine 193, and isoleucine 234 each bind NADP(+).

Belongs to the tetrahydrofolate dehydrogenase/cyclohydrolase family. In terms of assembly, homodimer.

The enzyme catalyses (6R)-5,10-methylene-5,6,7,8-tetrahydrofolate + NADP(+) = (6R)-5,10-methenyltetrahydrofolate + NADPH. The catalysed reaction is (6R)-5,10-methenyltetrahydrofolate + H2O = (6R)-10-formyltetrahydrofolate + H(+). It functions in the pathway one-carbon metabolism; tetrahydrofolate interconversion. Functionally, catalyzes the oxidation of 5,10-methylenetetrahydrofolate to 5,10-methenyltetrahydrofolate and then the hydrolysis of 5,10-methenyltetrahydrofolate to 10-formyltetrahydrofolate. This is Bifunctional protein FolD from Maridesulfovibrio salexigens (strain ATCC 14822 / DSM 2638 / NCIMB 8403 / VKM B-1763) (Desulfovibrio salexigens).